The following is a 386-amino-acid chain: Patatin-15 (386 aa).

Residues 1 to 23 form the signal peptide; it reads MATTKSFLILFFMILATTSSTCA. In terms of domain architecture, PNPLA spans 32–229; the sequence is LSIDGGGIKG…TVGDPALLSL (198 aa). The short motif at 36-41 is the GXGXXG element; that stretch reads GGGIKG. The short motif at 75–79 is the GXSXG element; the sequence is GTSTG. Serine 77 acts as the Nucleophile in catalysis. Asparagine 115 is a glycosylation site (N-linked (GlcNAc...) asparagine). The Proton acceptor role is filled by aspartate 215. The DGA/G signature appears at 215–217; it reads DGG. Positions 321 to 384 form a coiled coil; it reads ENALTGTTTE…DRKKLRANKA (64 aa).

This sequence belongs to the patatin family. In terms of tissue distribution, tuber.

The protein resides in the vacuole. In terms of biological role, probable lipolytic acyl hydrolase (LAH), an activity which is thought to be involved in the response of tubers to pathogens. This Solanum tuberosum (Potato) protein is Patatin-15.